Reading from the N-terminus, the 285-residue chain is MVKVGIIGGSGLEDPNILLNPTAISIDTPYGQPSDHLIQGTINGVECVLLARHGRKHDIMPGNVNYRANLWALYSLGVDVIIASTACGSLKEEVAPGHLLFPDSVFDRTNSRKATFFDGTFSGAPGVSHIQAHPTYNEKLRQVLISTAEKCKLVHHRTGFGVCIEGPRFSTKAESMVFKSWGASLVNMTMMPECILAKELGIPYATTALVTDYDCWKDEDQVTAASVMKVFAANVEKAKTLFIEAVAEIGKIDWSAEILQTKTAARQSIMISPDVEVEFLKVPKT.

Phosphate-binding positions include Ser-10, 52 to 53 (RH), and 85 to 86 (TA). Met-188 provides a ligand contact to substrate. Thr-189 is a phosphate binding site. Substrate is bound at residue 212–214 (DYD).

It belongs to the PNP/MTAP phosphorylase family. MTAP subfamily. Homotrimer.

The protein localises to the cytoplasm. The protein resides in the nucleus. It catalyses the reaction S-methyl-5'-thioadenosine + phosphate = 5-(methylsulfanyl)-alpha-D-ribose 1-phosphate + adenine. Its pathway is amino-acid biosynthesis; L-methionine biosynthesis via salvage pathway; S-methyl-5-thio-alpha-D-ribose 1-phosphate from S-methyl-5'-thioadenosine (phosphorylase route): step 1/1. Its function is as follows. Catalyzes the reversible phosphorylation of S-methyl-5'-thioadenosine (MTA) to adenine and 5-methylthioribose-1-phosphate. Involved in the breakdown of MTA, a major by-product of polyamine biosynthesis. Responsible for the first step in the methionine salvage pathway after MTA has been generated from S-adenosylmethionine. Has broad substrate specificity with 6-aminopurine nucleosides as preferred substrates. The sequence is that of S-methyl-5'-thioadenosine phosphorylase from Caenorhabditis briggsae.